Here is a 1806-residue protein sequence, read N- to C-terminus: SH3 and multiple ankyrin repeat domains protein 3 (1806 aa).

The tract at residues 76–150 (MDGPGASAVV…KFLDEERLLQ (75 aa)) is intramolecular interaction with the ANK repeats. A Phosphotyrosine modification is found at Tyr-197. ANK repeat units lie at residues 223–253 (SGEC…HLDF), 257–286 (DGLT…SPDY), 290–320 (RGLT…QLGI), 324–353 (NGWQ…DMGA), 357–386 (SGNT…NRDV), and 390–420 (NSQT…DVVP). Over residues 407–416 (AEVIKTHKDS) the composition is skewed to basic and acidic residues. Residues 407-467 (AEVIKTHKDS…AQPAASPGPS (61 aa)) form a disordered region. Over residues 439-461 (LASPRPLQRSASDINLKGEAQPA) the composition is skewed to pro residues. Residues Ser-448, Ser-450, Ser-463, Ser-470, and Ser-558 each carry the phosphoserine modification. In terms of domain architecture, SH3 spans 546 to 605 (VPGRKFIAVKAHSPQGEGEIPLHRGEAVKVLSIGEGGFWEGTVKGRTGWFPADCVEEVQM). Residue Tyr-631 is modified to Phosphotyrosine. The PDZ domain maps to 646 to 740 (VAVLQKRDHE…RLVMKVVSVT (95 aa)). Disordered regions lie at residues 665–689 (KAET…ESVD) and 760–853 (PSTT…KGIP). The interval 753-760 (PPPPKRAP) is required for interaction with ABI1. At Ser-770 the chain carries Phosphoserine. Pro residues predominate over residues 813 to 845 (ATVKQRPTSRRITPAEISSLFERQGLPGPEKLP). Phosphoserine is present on residues Ser-857, Ser-866, and Ser-877. Residues 871–1021 (RFPRSTSMQD…FSASLFAPSK (151 aa)) are disordered. Residues 906-915 (DSGPPPAFSP) show a composition bias toward pro residues. A phosphoserine mark is found at Ser-966 and Ser-973. Residue Thr-988 is modified to Phosphothreonine. Over residues 993–1013 (PKRRPRPPGPDSPYANLGAFS) the composition is skewed to gly residues. Tyr-1006 is modified (phosphotyrosine). At Arg-1041 the chain carries Asymmetric dimethylarginine. Residues 1115–1124 (PGADLPSLQP) show a composition bias toward low complexity. 3 disordered regions span residues 1115 to 1460 (PGAD…MSTL), 1475 to 1525 (ADGH…HHAA), and 1546 to 1584 (SKLW…KDTR). A compositionally biased stretch (basic and acidic residues) spans 1173–1193 (TGKPLDPSSPLALALAARERA). Phosphothreonine is present on Thr-1204. 4 positions are modified to phosphoserine: Ser-1208, Ser-1233, Ser-1237, and Ser-1240. Residues 1251–1261 (EAEKVPREERK) are compositionally biased toward pro residues. Thr-1309 carries the post-translational modification Phosphothreonine. Ser-1328 carries the phosphoserine modification. The segment covering 1360–1370 (LPPAQLSSSDE) has biased composition (basic and acidic residues). Composition is skewed to low complexity over residues 1371–1392 (ETRE…ANGV) and 1444–1460 (HLET…MSTL). Positions 1485 to 1491 (PPVPPKP) match the SH3-binding motif. Position 1495 is a phosphoserine (Ser-1495). Residues 1495-1505 (SPLGKGPVTFR) show a composition bias toward polar residues. Positions 1569–1589 (ISELSSRLQQLNKDTRSLGEE) form a coiled coil. Phosphoserine occurs at positions 1585, 1596, 1604, and 1614. A compositionally biased stretch (low complexity) spans 1627–1637 (PGGPGGGASYS). Residues 1627–1664 (PGGPGGGASYSVRPSGRYPVARRAPSPVKPASLERVEG) are disordered. Pro residues predominate over residues 1638-1657 (VRPSGRYPVARRAPSPVKPA). Ser-1709, Ser-1711, and Ser-1713 each carry phosphoserine. An SAM domain is found at 1743–1806 (WSKFDVGDWL…ERALRQLDGS (64 aa)).

As to quaternary structure, may homomultimerize via its SAM domain. Interacts with BAIAP2, DBNL and SLC17A7/VGLUT1. Interacts with DLGAP1/GKAP, GRM1/MGLUR1, GRM5/MGLUR5 and LZTS3 C-termini via its PDZ domain. Interacts with ABI1, HOMER1, HOMER2, HOMER3 and CTTN/cortactin SH3 domain. Is part of a complex with DLG4/PSD-95 and DLGAP1/GKAP. Interacts (via PDZ domain) with the GRIA1 subunit of the AMPA receptor (via PDZ-binding motif). Interacts with WASF1 and CYFIP2; the interactions mediate the association of SHANK3 with the WAVE1 complex. Interacts with ARPC2; the interaction probably mediates the association of SHANK3 with the Arp2/3 complex. Interacts (via ANK repeats) with SHARPIN and SPTAN1. Interacts (via PDZ domain) with ARHGAP44 (probably via PDZ-binding motif); the interaction takes place in dendritic spines and promotes GRIA1 exocytosis. Interacts with CAMK2A. Interacts with DIP2A. Interacts with ADGRL3. In terms of tissue distribution, expressed in the cerebral cortex and the cerebellum.

The protein resides in the cytoplasm. Its subcellular location is the postsynaptic density. It localises to the cell projection. It is found in the dendritic spine. Functionally, major scaffold postsynaptic density protein which interacts with multiple proteins and complexes to orchestrate the dendritic spine and synapse formation, maturation and maintenance. Interconnects receptors of the postsynaptic membrane including NMDA-type and metabotropic glutamate receptors via complexes with GKAP/PSD-95 and HOMER, respectively, and the actin-based cytoskeleton. Plays a role in the structural and functional organization of the dendritic spine and synaptic junction through the interaction with Arp2/3 and WAVE1 complex as well as the promotion of the F-actin clusters. By way of this control of actin dynamics, participates in the regulation of developing neurons growth cone motility and the NMDA receptor-signaling. Also modulates GRIA1 exocytosis and GRM5/MGLUR5 expression and signaling to control the AMPA and metabotropic glutamate receptor-mediated synaptic transmission and plasticity. May be required at an early stage of synapse formation and be inhibited by IGF1 to promote synapse maturation. The protein is SH3 and multiple ankyrin repeat domains protein 3 (SHANK3) of Homo sapiens (Human).